Here is a 1434-residue protein sequence, read N- to C-terminus: Ankyrin and armadillo repeat-containing protein (1434 aa).

A helical membrane pass occupies residues 309–329; that stretch reads IRRGIGYLKLICFLIPFLLSL. ANK repeat units follow at residues 532 to 561, 569 to 598, 602 to 631, 638 to 667, and 671 to 701; these read AGYT…KVNQ, QGPT…DYTL, RGWM…SLLE, NQCT…NWRK, and KGNN…ELPV. ARM repeat units lie at residues 732 to 771, 773 to 812, 814 to 852, 855 to 894, 897 to 936, and 1072 to 1112; these read DQYW…NIST, KSAV…DIAQ, ENKD…VLCI, ENNQ…EVGR, KEIQ…SLAS, and PVSQ…CIVL.

Ubiquitously expressed with highest level in pancreas and lowest in skeletal muscle.

The protein resides in the membrane. In Homo sapiens (Human), this protein is Ankyrin and armadillo repeat-containing protein (ANKAR).